The sequence spans 229 residues: 3-dehydroquinate dehydratase (229 aa).

Residues 33-35 and Arg-65 each bind 3-dehydroquinate; that span reads EWR. The active-site Proton donor/acceptor is the His-121. Lys-146 serves as the catalytic Schiff-base intermediate with substrate. 3-dehydroquinate contacts are provided by Arg-188, Ser-207, and Gln-211.

It belongs to the type-I 3-dehydroquinase family. In terms of assembly, homodimer.

It carries out the reaction 3-dehydroquinate = 3-dehydroshikimate + H2O. It functions in the pathway metabolic intermediate biosynthesis; chorismate biosynthesis; chorismate from D-erythrose 4-phosphate and phosphoenolpyruvate: step 3/7. Its function is as follows. Involved in the third step of the chorismate pathway, which leads to the biosynthesis of aromatic amino acids. Catalyzes the cis-dehydration of 3-dehydroquinate (DHQ) and introduces the first double bond of the aromatic ring to yield 3-dehydroshikimate. The chain is 3-dehydroquinate dehydratase from Lactococcus lactis subsp. cremoris (strain SK11).